Consider the following 82-residue polypeptide: Large ribosomal subunit protein uL23 (82 aa).

It belongs to the universal ribosomal protein uL23 family. Part of the 50S ribosomal subunit. Contacts protein L29.

Binds to 23S rRNA. One of the proteins that surrounds the polypeptide exit tunnel on the outside of the ribosome. The chain is Large ribosomal subunit protein uL23 from Picrophilus torridus (strain ATCC 700027 / DSM 9790 / JCM 10055 / NBRC 100828 / KAW 2/3).